A 367-amino-acid chain; its full sequence is Putative C-&gt;U-editing enzyme APOBEC-4 (367 aa).

The CMP/dCMP-type deaminase domain occupies 61 to 177 (PQTKHLTFYE…AWNREALRSL (117 aa)). Zn(2+) is bound at residue His-93. Glu-95 acts as the Proton donor in catalysis. Zn(2+) is bound by residues Cys-127 and Cys-134.

This sequence belongs to the cytidine and deoxycytidylate deaminase family. It depends on Zn(2+) as a cofactor. Predominantly expressed in testis.

Its function is as follows. Putative C to U editing enzyme whose physiological substrate is not yet known. This chain is Putative C-&gt;U-editing enzyme APOBEC-4 (APOBEC4), found in Homo sapiens (Human).